A 3023-amino-acid chain; its full sequence is Genome polyprotein (3023 aa).

The Peptidase S30 domain occupies 132–274; it reads TCSSSGLDNL…QSITLRATHF (143 aa). Active-site for P1 proteinase activity residues include His183, Asp192, and Ser225. The short motif at 325 to 328 is the Involved in interaction with stylet and aphid transmission element; that stretch reads KITC. An Involved in virions binding and aphid transmission motif is present at residues 583 to 585; that stretch reads PTK. One can recognise a Peptidase C6 domain in the interval 609-731; that stretch reads MYIAKEGYCY…ESPMAQYKVG (123 aa). Residues Cys617 and His690 each act as for helper component proteinase activity in the active site. In terms of domain architecture, Helicase ATP-binding spans 1202–1354; that stretch reads QIAHNEHKDI…TQYPVELLIE (153 aa). 1215-1222 is a binding site for ATP; sequence GAVGSGKS. The short motif at 1304–1307 is the DEFH box element; the sequence is DEFH. The Helicase C-terminal domain occupies 1367–1532; the sequence is GTDAHADVVK…GLPVTTQNVS (166 aa). The short motif at 1796 to 1800 is the GxxxG motif element; sequence GIGLG. Positions 1856 to 1863 match the Nuclear localization signal motif; it reads KKGKSKGK. Tyr1878 is modified (O-(5'-phospho-RNA)-tyrosine). Position 1878 is an O-UMP-tyrosine; transient (Tyr1878). A Peptidase C4 domain is found at 2002 to 2218; that stretch reads SKALLKGVRD…ISWGSFTLVE (217 aa). Catalysis depends on for nuclear inclusion protein A activity residues His2047, Asp2082, and Cys2152. Residues 2484 to 2608 form the RdRp catalytic domain; it reads WVYCDADGSQ…AISPELEHVL (125 aa). Thr3006 is modified (phosphothreonine).

It belongs to the potyviridae genome polyprotein family. As to quaternary structure, interacts with host eIF4E protein (via cap-binding region); this interaction mediates the translation of the VPg-viral RNA conjugates. Part of a complex that comprises VPg, RNA, host EIF4E and EIF4G; this interaction mediates the translation of the VPg-viral RNA conjugates. VPg is uridylylated by the polymerase and is covalently attached to the 5'-end of the genomic RNA. This uridylylated form acts as a nucleotide-peptide primer for the polymerase. In terms of processing, potyviral RNA is expressed as two polyproteins which undergo post-translational proteolytic processing. Genome polyprotein is processed by NIa-pro, P1 and HC-pro proteinases resulting in the production of at least ten individual proteins. P3N-PIPO polyprotein is cleaved by P1 and HC-pro proteinases resulting in the production of three individual proteins. The P1 proteinase and the HC-pro cleave only their respective C-termini autocatalytically. 6K1 is essential for proper proteolytic separation of P3 from CI.

The protein localises to the host cytoplasmic vesicle. It localises to the host nucleus. It is found in the virion. The enzyme catalyses RNA(n) + a ribonucleoside 5'-triphosphate = RNA(n+1) + diphosphate. It carries out the reaction Hydrolyzes glutaminyl bonds, and activity is further restricted by preferences for the amino acids in P6 - P1' that vary with the species of potyvirus, e.g. Glu-Xaa-Xaa-Tyr-Xaa-Gln-|-(Ser or Gly) for the enzyme from tobacco etch virus. The natural substrate is the viral polyprotein, but other proteins and oligopeptides containing the appropriate consensus sequence are also cleaved.. It catalyses the reaction Hydrolyzes a Gly-|-Gly bond at its own C-terminus, commonly in the sequence -Tyr-Xaa-Val-Gly-|-Gly, in the processing of the potyviral polyprotein.. Functionally, required for aphid transmission and also has proteolytic activity. Only cleaves a Gly-Gly dipeptide at its own C-terminus. Interacts with virions and aphid stylets. Acts as a suppressor of RNA-mediated gene silencing, also known as post-transcriptional gene silencing (PTGS), a mechanism of plant viral defense that limits the accumulation of viral RNAs. May have RNA-binding activity. Has helicase activity. It may be involved in replication. In terms of biological role, indispensable for virus replication. Reduces the abundance of host transcripts related to jasmonic acid biosynthesis therefore altering the host defenses. In order to increase its own stability, decreases host protein degradation pathways. Its function is as follows. Indispensable for virus replication. Functionally, mediates the cap-independent, EIF4E-dependent translation of viral genomic RNAs. Binds to the cap-binding site of host EIF4E and thus interferes with the host EIF4E-dependent mRNA export and translation. VPg-RNA directly binds EIF4E and is a template for transcription. Also forms trimeric complexes with EIF4E-EIF4G, which are templates for translation. Has RNA-binding and proteolytic activities. Main protease that processes most of the polyprotein cleavages. In terms of biological role, an RNA-dependent RNA polymerase that plays an essential role in the virus replication. Its function is as follows. Involved in aphid transmission, cell-to-cell and systemis movement, encapsidation of the viral RNA and in the regulation of viral RNA amplification. The polypeptide is Genome polyprotein (Tobacco vein mottling virus (TVMV)).